The sequence spans 341 residues: Uroporphyrinogen decarboxylase (341 aa).

Substrate-binding positions include 23-27, D73, Y148, S203, and H318; that span reads RQAGR.

This sequence belongs to the uroporphyrinogen decarboxylase family. As to quaternary structure, homodimer.

It is found in the cytoplasm. The enzyme catalyses uroporphyrinogen III + 4 H(+) = coproporphyrinogen III + 4 CO2. It functions in the pathway porphyrin-containing compound metabolism; protoporphyrin-IX biosynthesis; coproporphyrinogen-III from 5-aminolevulinate: step 4/4. In terms of biological role, catalyzes the decarboxylation of four acetate groups of uroporphyrinogen-III to yield coproporphyrinogen-III. This chain is Uroporphyrinogen decarboxylase, found in Brucella ovis (strain ATCC 25840 / 63/290 / NCTC 10512).